The primary structure comprises 318 residues: Ornithine carbamoyltransferase (318 aa).

Carbamoyl phosphate-binding positions include 63–66 (STRT), Q90, R114, and 141–144 (HPCQ). L-ornithine is bound by residues N172, D235, and 239-240 (SM). Carbamoyl phosphate-binding positions include 275-276 (CL) and R303.

Belongs to the aspartate/ornithine carbamoyltransferase superfamily. OTCase family.

Its subcellular location is the cytoplasm. It carries out the reaction carbamoyl phosphate + L-ornithine = L-citrulline + phosphate + H(+). Its pathway is amino-acid biosynthesis; L-arginine biosynthesis; L-arginine from L-ornithine and carbamoyl phosphate: step 1/3. Its function is as follows. Reversibly catalyzes the transfer of the carbamoyl group from carbamoyl phosphate (CP) to the N(epsilon) atom of ornithine (ORN) to produce L-citrulline. The polypeptide is Ornithine carbamoyltransferase (Parasynechococcus marenigrum (strain WH8102)).